The primary structure comprises 251 residues: CCN family member 5 (251 aa).

The signal sequence occupies residues 1–23; sequence MRGNPLIHLLAISFLCILSMVYS. Residues 24 to 103 enclose the IGFBP N-terminal domain; sequence QLCPAPCACP…EEDDGSCEVN (80 aa). 6 disulfide bridges follow: Cys-26/Cys-50, Cys-30/Cys-52, Cys-32/Cys-53, Cys-39/Cys-56, Cys-64/Cys-78, and Cys-70/Cys-100. The 67-residue stretch at 98-164 folds into the VWFC domain; it reads GSCEVNGRRY…GRCCPEWVCD (67 aa). Positions 195-239 constitute a TSP type-1 domain; it reads CPNWSTAWGPCSTTCGLGIATRVSNQNRFCQLEIQRRLCLSRPCL. N-linked (GlcNAc...) asparagine glycosylation occurs at Asn-197.

This sequence belongs to the CCN family.

Its subcellular location is the secreted. May play an important role in modulating bone turnover. Promotes the adhesion of osteoblast cells and inhibits the binding of fibrinogen to integrin receptors. In addition, inhibits osteocalcin production. In Mus musculus (Mouse), this protein is CCN family member 5 (Ccn5).